Reading from the N-terminus, the 263-residue chain is Type III pantothenate kinase (263 aa).

14–21 (DIGNTSVN) contacts ATP. 115 to 118 (GADR) serves as a coordination point for substrate. The Proton acceptor role is filled by Asp-117. Residue Asp-137 participates in K(+) binding. ATP is bound at residue Thr-140. Residue Thr-192 participates in substrate binding.

This sequence belongs to the type III pantothenate kinase family. As to quaternary structure, homodimer. Requires NH4(+) as cofactor. K(+) serves as cofactor.

It localises to the cytoplasm. It carries out the reaction (R)-pantothenate + ATP = (R)-4'-phosphopantothenate + ADP + H(+). It functions in the pathway cofactor biosynthesis; coenzyme A biosynthesis; CoA from (R)-pantothenate: step 1/5. Functionally, catalyzes the phosphorylation of pantothenate (Pan), the first step in CoA biosynthesis. This Dehalococcoides mccartyi (strain ATCC BAA-2100 / JCM 16839 / KCTC 5957 / BAV1) protein is Type III pantothenate kinase.